Reading from the N-terminus, the 28-residue chain is Short cationic peptide-1b (28 aa).

Glu-28 is modified (glutamic acid 1-amide).

As to expression, expressed by the venom gland.

The protein resides in the secreted. This Cupiennius salei (American wandering spider) protein is Short cationic peptide-1b.